A 331-amino-acid polypeptide reads, in one-letter code: Probable leucine carboxyl methyltransferase 1 (331 aa).

S-adenosyl-L-methionine is bound by residues R82, G107, D131, 179 to 180 (DL), and E206.

The protein belongs to the methyltransferase superfamily. LCMT family.

It catalyses the reaction [phosphatase 2A protein]-C-terminal L-leucine + S-adenosyl-L-methionine = [phosphatase 2A protein]-C-terminal L-leucine methyl ester + S-adenosyl-L-homocysteine. Methylates the carboxyl group of the C-terminal leucine residue of protein phosphatase 2A catalytic subunits to form alpha-leucine ester residues. This chain is Probable leucine carboxyl methyltransferase 1, found in Caenorhabditis briggsae.